The primary structure comprises 141 residues: MQQTAWAPRTSGIAGCGAGGVVMAIASVTLVTDTPGRVLTGVAALGLILFASATWRARPRLAITPDGLAIRGWFRTQLLRHSNIKIIRIDEFRRYGRLVRLLEIETVSGGLLILSRWDLGTDPVEVLDALTAAGYAGRGQR.

Helical transmembrane passes span Gly12 to Thr32 and Pro35 to Trp55.

It is found in the cell membrane. This is an uncharacterized protein from Mycobacterium tuberculosis (strain CDC 1551 / Oshkosh).